The following is a 915-amino-acid chain: Metabotropic glutamate receptor 7 (915 aa).

The N-terminal stretch at 1–34 (MVQLRKLLRVLTLMKFPCCVLEVLLCALAAAARG) is a signal peptide. Residues 35 to 590 (QEMYAPHSIR…IIKLEWHSPW (556 aa)) lie on the Extracellular side of the membrane. Cysteine 67 and cysteine 109 form a disulfide bridge. Residue asparagine 98 is glycosylated (N-linked (GlcNAc...) asparagine). Residues serine 159, 180–182 (AST), tyrosine 230, and aspartate 314 contribute to the L-glutamate site. Cystine bridges form between cysteine 249–cysteine 541, cysteine 374–cysteine 390, cysteine 430–cysteine 437, cysteine 523–cysteine 542, cysteine 527–cysteine 545, cysteine 548–cysteine 560, and cysteine 563–cysteine 576. Lysine 407 is a binding site for L-glutamate. Asparagine 458 and asparagine 486 each carry an N-linked (GlcNAc...) asparagine glycan. Asparagine 572 carries an N-linked (GlcNAc...) asparagine glycan. Residues 591–615 (AVIPVFLAMLGIIATIFVMATFIRY) traverse the membrane as a helical segment. Topologically, residues 616-627 (NDTPIVRASGRE) are cytoplasmic. A helical membrane pass occupies residues 628-648 (LSYVLLTGIFLCYIITFLMIA). Topologically, residues 649–654 (KPDVAV) are extracellular. The chain crosses the membrane as a helical span at residues 655 to 675 (CSFRRVFLGLGMCISYAALLT). At 676-702 (KTNRIYRIFEQGKKSVTAPRLISPTSQ) the chain is on the cytoplasmic side. Residues 703–723 (LAITSSLISVQLLGVFIWFGV) form a helical membrane-spanning segment. Over 724-753 (DPPNIIIDYDEHKTMNPEQARGVLKCDITD) the chain is Extracellular. A helical transmembrane segment spans residues 754–775 (LQIICSLGYSILLMVTCTVYAI). The Cytoplasmic segment spans residues 776–788 (KTRGVPENFNEAK). Residues 789 to 810 (PIGFTMYTTCIVWLAFIPIFFG) form a helical membrane-spanning segment. Over 811–825 (TAQSAEKLYIQTTTL) the chain is Extracellular. Residues 826 to 850 (TISMNLSASVALGMLYMPKVYIIIF) traverse the membrane as a helical segment. The Cytoplasmic segment spans residues 851–915 (HPELNVQKRK…KYVSYNNLVI (65 aa)). The segment at 874–895 (SRLSHKPSDRPNGEAKTELCEN) is disordered. Positions 879–892 (KPSDRPNGEAKTEL) are enriched in basic and acidic residues. Phosphoserine is present on serine 900.

It belongs to the G-protein coupled receptor 3 family. In terms of assembly, homodimer. Interacts with PICK1. Post-translationally, N-glycosylated. In terms of tissue distribution, expressed in many areas of the brain, especially in the cerebral cortex, hippocampus, and cerebellum. Expression of GRM7 isoforms in non-neuronal tissues appears to be restricted to isoform 3 and isoform 4.

It localises to the cell membrane. Its function is as follows. G-protein coupled receptor activated by glutamate that regulates axon outgrowth through the MAPK-cAMP-PKA signaling pathway during neuronal development. Ligand binding causes a conformation change that triggers signaling via guanine nucleotide-binding proteins (G proteins) and modulates the activity of downstream effectors, such as adenylate cyclase that it inhibits. The polypeptide is Metabotropic glutamate receptor 7 (GRM7) (Homo sapiens (Human)).